The following is a 191-amino-acid chain: Adenine phosphoribosyltransferase (191 aa).

This sequence belongs to the purine/pyrimidine phosphoribosyltransferase family. As to quaternary structure, homodimer.

Its subcellular location is the cytoplasm. It carries out the reaction AMP + diphosphate = 5-phospho-alpha-D-ribose 1-diphosphate + adenine. Its pathway is purine metabolism; AMP biosynthesis via salvage pathway; AMP from adenine: step 1/1. Functionally, catalyzes a salvage reaction resulting in the formation of AMP, that is energically less costly than de novo synthesis. This Bordetella bronchiseptica (strain ATCC BAA-588 / NCTC 13252 / RB50) (Alcaligenes bronchisepticus) protein is Adenine phosphoribosyltransferase.